The following is a 440-amino-acid chain: Amino acid transporter AVT6D (440 aa).

11 consecutive transmembrane segments (helical) span residues 26 to 46 (FAGA…MAIP), 47 to 67 (AAFK…IAWL), 102 to 122 (AVTV…SIII), 149 to 169 (WNTR…PLVL), 182 to 202 (ISFL…IIAL), 219 to 239 (GGLS…AFTF), 262 to 282 (ISVI…YLLF), 309 to 329 (IVRL…NFSL), 356 to 376 (FPLL…WYFF), 377 to 397 (QFLG…AIVL), and 410 to 430 (IVAS…ISTN).

The protein belongs to the amino acid/polyamine transporter 2 family. Amino acid/auxin permease (AAAP) (TC 2.A.18.6) subfamily.

It localises to the membrane. The protein is Amino acid transporter AVT6D of Arabidopsis thaliana (Mouse-ear cress).